Here is a 147-residue protein sequence, read N- to C-terminus: MVHFTAEEKTAITSVWGKVNVEETGGEALGRLLVVYPWTQRFFDSFGNLSSASAILGNPKVKAHGKKVLTSLGEAVKNLDNLKATFSKLSELHCDKLHVDPENFRLLGNVLVVVLAVHFGKEFTPEVHAAWQKLVAGVASALAHKYH.

The Globin domain occupies H3–H147. Phosphoserine is present on residues S14 and S51. H64 and H93 together coordinate heme b.

The protein belongs to the globin family. Red blood cells.

Functionally, hemoglobin epsilon chain is an embryonic-type beta-type chain found in prenatal and neonatal marsupials. The sequence is that of Hemoglobin subunit epsilon (HBE1) from Notamacropus eugenii (Tammar wallaby).